Consider the following 315-residue polypeptide: uncharacterized protein (315 aa).

Residues 1-23 are compositionally biased toward polar residues; sequence MSNTDALNTANTQITENVDTSSM. Residues 1–31 are disordered; the sequence is MSNTDALNTANTQITENVDTSSMKVEKTHDS.

This is an uncharacterized protein from Acanthamoeba polyphaga mimivirus (APMV).